The primary structure comprises 867 residues: MALPVYSLKSHIPITTIASAKMNYTPNKGMITANGRSRRIRLSPNKIVACAGEADRTFPSQSLEKTALFPDQFSEKNGTPSNFTPPNREFPPSFWNNDIINSITASHKVQTGDRKRIQTLISEIKNVFNSMGDGETSPSAYDTAWVARIPAVDGSEQPQFPQTLEWILQNQLKDGSWGEEFYFLAYDRLLATLACIITLTIWRTGNVQLHKGIEFFRKQVVRMDDEADNHRPSGFEIVFPAMLNEAKSLGLDLPYELPFIEQMVKKREAKLKMITTNVLYTIQTTLLYSLEGLHEIVDFDKIIKLQSKDGSFLGSPASTAAVFMQTGNTKCLEFLEFVLRKFRNHVPSDYPLDLFERLWVVDTVERLGIDRHFKKEIKDALDYVYSCWDERGIGWAKDSPIADIDDTAMGLRILRLHGYNVSPDVLKTFKDENGEFFCFMGQTQRGVTDMLNVYRCSQVAFPGETIMEEAKLCTERYLRNALENADAFDKWAIKKNIRGEVEYALKYPWHRSMPRLEVRSYIGNYGPNDVWLGKSLYMMPYISNEKYLELAKLDFNSVQSLHQEEIRELVRWCKSSGFTELKFTRDRVVETYFAVASSMFEPEFSTCRAVYTKISVLLVILDDLYDGYGSPDEIKLFSEAVKRWDLSLLEQMPDHMKICFLGLYNTVNEVAEEGRKTQGHDVLGYIRNLWEIQLAAFTREAEWSQGKYVPSFDEYIENAQVSIGVATILLITILFTEEDDILSHIDYGSKFLRLASLTARLANDIKTYQEERAHGEVVSAIQCYMKDRPEITEEEALKYVYGRMVNDLAELNSEYLKSNEMPQNCKRLVFDTARVAQLFTMEGDGLTYSDTMEIKEHIKKCLFEPAT.

The transit peptide at 1–49 (MALPVYSLKSHIPITTIASAKMNYTPNKGMITANGRSRRIRLSPNKIVA) directs the protein to the chloroplast. Lys270 lines the substrate pocket. Residues 403–406 (DIDD) carry the DXDD motif motif. Lys490 serves as a coordination point for substrate. Mg(2+) contacts are provided by Asp622, Asp626, Asn763, Asp764, Thr767, and Glu771. Residues 622–626 (DDLYD) carry the DDXXD motif motif.

The protein belongs to the terpene synthase family. Tpsd subfamily. Mg(2+) is required as a cofactor.

The protein resides in the plastid. Its subcellular location is the chloroplast. The catalysed reaction is 8-hydroxycopalyl diphosphate = cis-abienol + diphosphate. It catalyses the reaction (2E,6E,10E)-geranylgeranyl diphosphate + H2O = 8-hydroxycopalyl diphosphate. It functions in the pathway terpene metabolism; oleoresin biosynthesis. Functionally, involved in the biosynthesis of cis-abienol, a labdane diterpene that can be used as synthesis precursor of ambergris substitution fragance products. Bifunctional class I/II enzyme in which both the bicyclization and water capture occur in the class II active site, resulting in an intermediary labda-13-en-8-ol diphosphate, which undergoes cleavage of the diphosphate group and final deprotonation at the class I active site. No activity with copalyl diphosphate as substrate. The polypeptide is Bifunctional cis-abienol synthase, chloroplastic (CAS) (Abies balsamea (Balsam fir)).